Here is a 708-residue protein sequence, read N- to C-terminus: DNA-directed RNA polymerase III subunit RPC5 (708 aa).

A compositionally biased stretch (basic and acidic residues) spans 146–155 (DAKHREREAA). Residues 146-170 (DAKHREREAANEAGDSSQDEAEDDV) form a disordered region. 2 positions are modified to phosphoserine: serine 161 and serine 162. Residue lysine 171 forms a Glycyl lysine isopeptide (Lys-Gly) (interchain with G-Cter in SUMO2) linkage. Serine 192 is modified (phosphoserine). Phosphotyrosine is present on tyrosine 224. Residue lysine 432 forms a Glycyl lysine isopeptide (Lys-Gly) (interchain with G-Cter in SUMO2) linkage. Residues 485-552 (QLRVPAVPPG…DSFNGHPPQG (68 aa)) are disordered. A Glycyl lysine isopeptide (Lys-Gly) (interchain with G-Cter in SUMO1); alternate cross-link involves residue lysine 498. Lysine 498 participates in a covalent cross-link: Glycyl lysine isopeptide (Lys-Gly) (interchain with G-Cter in SUMO2); alternate. The segment covering 502 to 519 (VSEEGEEDEEQEAEEEPM) has biased composition (acidic residues). Phosphoserine occurs at positions 503 and 522. Residues 556–708 (TPVARELKAF…MWYLKGTVQS (153 aa)) are required for Pol III complex stability. Lysine 659 participates in a covalent cross-link: Glycyl lysine isopeptide (Lys-Gly) (interchain with G-Cter in SUMO2).

Component of the RNA polymerase III complex consisting of at least 17 subunits: a ten-subunit horseshoe-shaped catalytic core composed of POLR3A/RPC1, POLR3B/RPC2, POLR1C/RPAC1, POLR1D/RPAC2, POLR3K/RPC10, POLR2E/RPABC1, POLR2F/RPABC2, POLR2H/RPABC3, POLR2K/RPABC4 and POLR2L/RPABC5; the stalk composed of two subunits POLR3H/RPC8 and CRCP/RPC9, forming a structural mobile part that protrudes out of the core and functions primarily in transcription initiation; and additional subunits homologous to general transcription factors of the RNA polymerase II machinery, POLR3D/RPC4-POLR3E/RPC5 heterodimer and POLR3/CRPC3-POLR3F/RPC6-POLR3G/RPC7 heterotrimer.

It is found in the nucleus. Functionally, DNA-dependent RNA polymerase catalyzes the transcription of DNA into RNA using the four ribonucleoside triphosphates as substrates. Specific peripheric component of RNA polymerase III (Pol III) which synthesizes small non-coding RNAs including 5S rRNA, snRNAs, tRNAs and miRNAs from at least 500 distinct genomic loci. Assembles with POLR3D/RPC4 forming a subcomplex that binds the Pol III core. Enables recruitment of Pol III at transcription initiation site and drives transcription initiation from both type 2 and type 3 DNA promoters. Required for efficient transcription termination and reinitiation. Plays a key role in sensing and limiting infection by intracellular bacteria and DNA viruses. Acts as a nuclear and cytosolic DNA sensor involved in innate immune response. Can sense non-self dsDNA that serves as template for transcription into dsRNA. The non-self RNA polymerase III transcripts, such as Epstein-Barr virus-encoded RNAs (EBERs) induce type I interferon and NF-kappa-B through the RIG-I pathway. This is DNA-directed RNA polymerase III subunit RPC5 from Homo sapiens (Human).